A 403-amino-acid chain; its full sequence is Heptahelical transmembrane protein ADIPOR3 (403 aa).

Residues 1 to 73 (MAAAAGEEVE…LSAFSIHNET (73 aa)) are Cytoplasmic-facing. A helical membrane pass occupies residues 74 to 94 (LNVWTHLIGFFIFLVLTIYTA). Residues 95 to 209 (TQVPNVVDLQ…QLIRPIPRWP (115 aa)) lie on the Extracellular side of the membrane. The chain crosses the membrane as a helical span at residues 210–230 (FYAFLGGAMFCLLASSTCHLL). Over 231 to 246 (SCHSRRLAYIMLRLDY) the chain is Cytoplasmic. The helical transmembrane segment at 247–267 (AGIAALIATSFYPPVYYSFMC) threads the bilayer. Residues 268–274 (YPFFCNL) are Extracellular-facing. A helical membrane pass occupies residues 275–295 (YLSCITILGVATIAFSLLPVF). Residues 296-306 (QNPEFRTIRAC) are Cytoplasmic-facing. The chain crosses the membrane as a helical span at residues 307 to 327 (LFFGMGASGVIPVIHKLILFW). The Extracellular portion of the chain corresponds to 328-331 (HQPE). Residues 332–352 (ALHTTAYEVLMGLFYGIGALV) traverse the membrane as a helical segment. The Cytoplasmic segment spans residues 353 to 374 (YATRVPERWMPGKFDIAGHSHQ). A helical membrane pass occupies residues 375–395 (LFHVLVVAGAYTHYHSGLVYL). Topologically, residues 396–403 (KWRDVQGC) are extracellular.

This sequence belongs to the ADIPOR family.

The protein resides in the membrane. May play a role in abiotic stress response. The polypeptide is Heptahelical transmembrane protein ADIPOR3 (ADIPOR3) (Oryza sativa subsp. japonica (Rice)).